Reading from the N-terminus, the 404-residue chain is Deoxyguanosinetriphosphate triphosphohydrolase-like protein 1 (404 aa).

The region spanning 75 to 219 (RLTHSIEVAQ…AAIADDIAYN (145 aa)) is the HD domain.

This sequence belongs to the dGTPase family. Type 2 subfamily.

This is Deoxyguanosinetriphosphate triphosphohydrolase-like protein 1 from Mesorhizobium japonicum (strain LMG 29417 / CECT 9101 / MAFF 303099) (Mesorhizobium loti (strain MAFF 303099)).